Here is a 204-residue protein sequence, read N- to C-terminus: Recombination protein RecR (204 aa).

The C4-type zinc-finger motif lies at 58 to 75; it reads CSVCQNITDVGVDPCALC. The Toprim domain occupies 83–181; sequence SVICVVESPV…HVTKIARGIP (99 aa).

Belongs to the RecR family.

Its function is as follows. May play a role in DNA repair. It seems to be involved in an RecBC-independent recombinational process of DNA repair. It may act with RecF and RecO. The sequence is that of Recombination protein RecR from Pelodictyon phaeoclathratiforme (strain DSM 5477 / BU-1).